A 184-amino-acid chain; its full sequence is Large ribosomal subunit protein uL6 (184 aa).

Belongs to the universal ribosomal protein uL6 family. Part of the 50S ribosomal subunit.

This protein binds to the 23S rRNA, and is important in its secondary structure. It is located near the subunit interface in the base of the L7/L12 stalk, and near the tRNA binding site of the peptidyltransferase center. In Pseudothermotoga lettingae (strain ATCC BAA-301 / DSM 14385 / NBRC 107922 / TMO) (Thermotoga lettingae), this protein is Large ribosomal subunit protein uL6.